The chain runs to 435 residues: Trigger factor (435 aa).

Positions 163-248 (GDRVTIDFEG…LTRIEAQNLP (86 aa)) constitute a PPIase FKBP-type domain.

The protein belongs to the FKBP-type PPIase family. Tig subfamily.

It is found in the cytoplasm. It catalyses the reaction [protein]-peptidylproline (omega=180) = [protein]-peptidylproline (omega=0). Functionally, involved in protein export. Acts as a chaperone by maintaining the newly synthesized protein in an open conformation. Functions as a peptidyl-prolyl cis-trans isomerase. The sequence is that of Trigger factor from Leptothrix cholodnii (strain ATCC 51168 / LMG 8142 / SP-6) (Leptothrix discophora (strain SP-6)).